Consider the following 485-residue polypeptide: Glutamyl-tRNA(Gln) amidotransferase subunit A (485 aa).

Residues lysine 78 and serine 153 each act as charge relay system in the active site. The active-site Acyl-ester intermediate is serine 177.

This sequence belongs to the amidase family. GatA subfamily. As to quaternary structure, heterotrimer of A, B and C subunits.

It catalyses the reaction L-glutamyl-tRNA(Gln) + L-glutamine + ATP + H2O = L-glutaminyl-tRNA(Gln) + L-glutamate + ADP + phosphate + H(+). Functionally, allows the formation of correctly charged Gln-tRNA(Gln) through the transamidation of misacylated Glu-tRNA(Gln) in organisms which lack glutaminyl-tRNA synthetase. The reaction takes place in the presence of glutamine and ATP through an activated gamma-phospho-Glu-tRNA(Gln). This chain is Glutamyl-tRNA(Gln) amidotransferase subunit A, found in Desulfotalea psychrophila (strain LSv54 / DSM 12343).